A 212-amino-acid chain; its full sequence is Thymidylate kinase (212 aa).

Residue 11–18 (GPEGAGKT) coordinates ATP.

The protein belongs to the thymidylate kinase family.

The enzyme catalyses dTMP + ATP = dTDP + ADP. Phosphorylation of dTMP to form dTDP in both de novo and salvage pathways of dTTP synthesis. This Streptococcus pneumoniae (strain ATCC 700669 / Spain 23F-1) protein is Thymidylate kinase.